The primary structure comprises 195 residues: HTH-type transcriptional regulator BetI (195 aa).

Residues 8-68 (PIRRRQLIDA…ATMRDITSQL (61 aa)) form the HTH tetR-type domain. Residues 31–50 (TIAQIARRAGVSTGIISHYF) constitute a DNA-binding region (H-T-H motif).

The protein operates within amine and polyamine biosynthesis; betaine biosynthesis via choline pathway [regulation]. Repressor involved in the biosynthesis of the osmoprotectant glycine betaine. It represses transcription of the choline transporter BetT and the genes of BetAB involved in the synthesis of glycine betaine. The sequence is that of HTH-type transcriptional regulator BetI from Klebsiella pneumoniae (strain 342).